Here is a 137-residue protein sequence, read N- to C-terminus: uncharacterized protein (137 aa).

4 consecutive transmembrane segments (helical) span residues alanine 14–serine 34, tyrosine 48–isoleucine 68, phenylalanine 84–threonine 104, and histidine 109–phenylalanine 129.

It localises to the cell membrane. This is an uncharacterized protein from Methanocaldococcus jannaschii (strain ATCC 43067 / DSM 2661 / JAL-1 / JCM 10045 / NBRC 100440) (Methanococcus jannaschii).